Here is a 312-residue protein sequence, read N- to C-terminus: Glutaminase (312 aa).

Residues serine 67, asparagine 118, glutamate 162, asparagine 169, tyrosine 193, tyrosine 245, and valine 263 each contribute to the substrate site.

It belongs to the glutaminase family. Homotetramer.

The catalysed reaction is L-glutamine + H2O = L-glutamate + NH4(+). This is Glutaminase from Bordetella avium (strain 197N).